The sequence spans 258 residues: Imidazole glycerol phosphate synthase subunit HisF (258 aa).

Active-site residues include Asp11 and Asp130.

This sequence belongs to the HisA/HisF family. Heterodimer of HisH and HisF.

The protein localises to the cytoplasm. The enzyme catalyses 5-[(5-phospho-1-deoxy-D-ribulos-1-ylimino)methylamino]-1-(5-phospho-beta-D-ribosyl)imidazole-4-carboxamide + L-glutamine = D-erythro-1-(imidazol-4-yl)glycerol 3-phosphate + 5-amino-1-(5-phospho-beta-D-ribosyl)imidazole-4-carboxamide + L-glutamate + H(+). It participates in amino-acid biosynthesis; L-histidine biosynthesis; L-histidine from 5-phospho-alpha-D-ribose 1-diphosphate: step 5/9. Functionally, IGPS catalyzes the conversion of PRFAR and glutamine to IGP, AICAR and glutamate. The HisF subunit catalyzes the cyclization activity that produces IGP and AICAR from PRFAR using the ammonia provided by the HisH subunit. This chain is Imidazole glycerol phosphate synthase subunit HisF, found in Sodalis glossinidius (strain morsitans).